A 3491-amino-acid polypeptide reads, in one-letter code: Erythronolide synthase EryA1 (3491 aa).

A loading domain region spans residues 1–484 (MSGPRSRTTS…TPRALAEALA (484 aa)). The segment at 57–372 (VFVFPGQGAQ…AAQAFTGGVA (316 aa)) is acyltransferase 1. Residue S145 is the Acyl-ester intermediate; for acyltransferase 1 activity of the active site. The interval 386-410 (PALCRSSRRPRRKTSRPSPASTGTR) is disordered. Over residues 391-400 (SSRRPRRKTS) the composition is skewed to basic residues. The Carrier 1 domain maps to 412 to 487 (RTCCERLLAV…ALAEALAAGT (76 aa)). S447 carries the post-translational modification O-(pantetheine 4'-phosphoryl)serine. One can recognise a Ketosynthase family 3 (KS3) 1 domain in the interval 504–928 (GEPVAVVAMA…GTNAHAIIEE (425 aa)). Module regions lie at residues 507-1958 (VAVV…AHLA) and 1982-3404 (IAIV…GFLD). The active-site Acyl-thioester intermediate; for beta-ketoacyl synthase 1 activity is the C677. Residues H812 and H850 each act as for beta-ketoacyl synthase 1 activity in the active site. Residues 1031–1352 (VFVFPGQGWQ…ALSRAFAAGV (322 aa)) form an acyltransferase 2 region. The active-site Acyl-ester intermediate; for acyltransferase 2 activity is S1128. A beta-ketoacyl reductase 1 region spans residues 1613–1790 (GTVLVTGGTG…ATAVAWGTWA (178 aa)). NADP(+)-binding positions include 1621–1624 (TGGV), 1644–1647 (SRSG), 1673–1674 (DV), K1723, and 1745–1746 (FS). Y1760 acts as the For beta-ketoacyl reductase 1 activity in catalysis. The region spanning 1886–1961 (EALFELVRSH…TLAAHLAAEL (76 aa)) is the Carrier 2 domain. At S1921 the chain carries O-(pantetheine 4'-phosphoryl)serine. The Ketosynthase family 3 (KS3) 2 domain maps to 1979-2402 (DEPIAIVGMA…GTNAHVIIAE (424 aa)). The active-site Acyl-thioester intermediate; for beta-ketoacyl synthase 2 activity is C2148. Catalysis depends on for beta-ketoacyl synthase 2 activity residues H2283 and H2323. The acyltransferase 3 stretch occupies residues 2508–2827 (VFVFPGQGAQ…LADAHTRGVA (320 aa)). S2598 acts as the Acyl-ester intermediate; for acyltransferase 3 activity in catalysis. The tract at residues 3057–3233 (GTILVTGGTA…ATSVAWGLWA (177 aa)) is beta-ketoacyl reductase 2. Residues 3065 to 3068 (TAGL), 3088 to 3091 (SRRG), 3117 to 3118 (DV), K3168, and 3188 to 3189 (FS) each bind NADP(+). Y3203 acts as the For beta-ketoacyl reductase 2 activity in catalysis. The Carrier 3 domain maps to 3329 to 3407 (ERTAELVRLV…AVAGFLDAEL (79 aa)). O-(pantetheine 4'-phosphoryl)serine is present on S3367. The interval 3456-3491 (QAADASGTGANPSGDDLGEAGVDELLEALGRELDGD) is disordered. Acidic residues predominate over residues 3471-3481 (DLGEAGVDELL).

In terms of assembly, homodimer. Erythronolide synthase is composed of EryAI, EryAII and EryAIII multimodular (2 modules) polypeptides each coding for a functional synthase subunit which participates in 2 of the six FAS-like elongation steps required for formation of the polyketide. Module 1, 2, 3, 4, 5, and 6 participating in biosynthesis steps 1, 2, 3, 4, 5, and 6, respectively. The cofactor is pantetheine 4'-phosphate.

The enzyme catalyses 6 (S)-methylmalonyl-CoA + propanoyl-CoA + 6 NADPH + 12 H(+) = 6-deoxyerythronolide B + 6 CO2 + 6 NADP(+) + 7 CoA + H2O. It participates in antibiotic biosynthesis; erythromycin biosynthesis. Its function is as follows. Involved in the biosynthesis of antibiotic erythromycin via the biosynthesis of its aglycone precursor, 6-deoxyerythronolide B (6-dEB). This is Erythronolide synthase EryA1 (eryA) from Saccharopolyspora erythraea (Streptomyces erythraeus).